The following is a 62-amino-acid chain: DNA-binding protein 7b (62 aa).

It belongs to the 7 kDa DNA-binding/endoribonuclease P2 family. As to quaternary structure, monomer.

The protein resides in the cytoplasm. In terms of biological role, can constrain negative DNA supercoils. May be involved in maintaining the integrity of the genome at high temperature. This Acidianus hospitalis (strain W1) protein is DNA-binding protein 7b.